A 370-amino-acid chain; its full sequence is 3-isopropylmalate dehydrogenase (370 aa).

Positions 99, 109, 137, and 227 each coordinate substrate. 3 residues coordinate Mg(2+): Asp227, Asp251, and Asp255. 290 to 302 (GSAPDIAGQDKAN) provides a ligand contact to NAD(+).

Belongs to the isocitrate and isopropylmalate dehydrogenases family. LeuB type 1 subfamily. In terms of assembly, homodimer. The cofactor is Mg(2+). Mn(2+) serves as cofactor.

Its subcellular location is the cytoplasm. The enzyme catalyses (2R,3S)-3-isopropylmalate + NAD(+) = 4-methyl-2-oxopentanoate + CO2 + NADH. It participates in amino-acid biosynthesis; L-leucine biosynthesis; L-leucine from 3-methyl-2-oxobutanoate: step 3/4. Its function is as follows. Catalyzes the oxidation of 3-carboxy-2-hydroxy-4-methylpentanoate (3-isopropylmalate) to 3-carboxy-4-methyl-2-oxopentanoate. The product decarboxylates to 4-methyl-2 oxopentanoate. The protein is 3-isopropylmalate dehydrogenase of Rhodospirillum rubrum (strain ATCC 11170 / ATH 1.1.1 / DSM 467 / LMG 4362 / NCIMB 8255 / S1).